Here is a 73-residue protein sequence, read N- to C-terminus: Long neurotoxin 1 (73 aa).

Intrachain disulfides connect C3/C21, C14/C42, C27/C31, C46/C57, and C58/C63.

This sequence belongs to the three-finger toxin family. Long-chain subfamily. Type II alpha-neurotoxin sub-subfamily. In terms of tissue distribution, expressed by the venom gland.

It localises to the secreted. Its function is as follows. Binds with high affinity to muscular (alpha-1/CHRNA1) and neuronal (alpha-7/CHRNA7) nicotinic acetylcholine receptor (nAChR) and inhibits acetylcholine from binding to the receptor, thereby impairing neuromuscular and neuronal transmission. The protein is Long neurotoxin 1 of Ophiophagus hannah (King cobra).